We begin with the raw amino-acid sequence, 561 residues long: Potassium-transporting ATPase potassium-binding subunit (561 aa).

The next 12 helical transmembrane spans lie at 5–25 (LAAG…YVPV), 60–80 (YGYA…LYFL), 86–106 (VLPL…NTAI), 130–150 (VGLA…AIAL), 177–197 (ILLP…VIQS), 247–267 (PTPL…VCLT), 281–301 (LTLL…TLAA), 324–344 (FGIP…TGAV), 376–396 (GLYG…LLVG), 415–435 (ALSI…TVIL), 491–511 (ICML…AGAL), and 533–553 (GLLT…ALAL).

This sequence belongs to the KdpA family. As to quaternary structure, the system is composed of three essential subunits: KdpA, KdpB and KdpC.

Its subcellular location is the cell membrane. In terms of biological role, part of the high-affinity ATP-driven potassium transport (or Kdp) system, which catalyzes the hydrolysis of ATP coupled with the electrogenic transport of potassium into the cytoplasm. This subunit binds the extracellular potassium ions and delivers the ions to the membrane domain of KdpB through an intramembrane tunnel. The protein is Potassium-transporting ATPase potassium-binding subunit of Rhodococcus erythropolis (strain PR4 / NBRC 100887).